The primary structure comprises 279 residues: Fatty-acid-binding protein 1 (279 aa).

Dodecanoate contacts are provided by Arg103, Tyr116, and Ser183.

This sequence belongs to the chalcone isomerase family. In terms of tissue distribution, expressed in developing cotyledons, young seedlings, roots, seeds, embryos, macrospores, preanthesis and tapetum. Restricted to developing and reproductive tissues.

It localises to the plastid. The protein localises to the chloroplast stroma. Fatty-acid-binding protein. Interacts preferentially with saturated fatty acid. May be involved in alpha-linolenic (C18:3) metabolism. In Arabidopsis thaliana (Mouse-ear cress), this protein is Fatty-acid-binding protein 1 (FAP1).